We begin with the raw amino-acid sequence, 1656 residues long: MAQKPNFLKKLISAGLVTASTATIVASFAGSAMGAAIQQNRTTNGVATTVDGVGFDQTVALANVAVAPNAVITANANNGINLNTPAGSFNGLFLSNANNLAVTVSEDTTLGFINNAANNANRFNLTLDAGKTLTITGQGITNVQSAATHNAQNIVAKFNGGAAIANNDLSGLGTIDFGAAASTLVFDLANPTTQKAPLILADNALIVNGANGTLNVTNGFIQVSDKSFATVKAINIGDGQGFMFNTNATNANALNLQAGGTTINFNGTDGTGRLVLLSKNGAATDFNVTGSLGGNLKGIIELNTVAINGQLIANAGPANAVIGTNNGAGRAAGFVVSVDNGKAATIDGQVYAKDMVIQSANANGQVNFRHIVDVGIDGTTAFKTAASIVAITQNSNFGTTDFGNLAAQVTVPDTMTLTGNFTGDANNPGNTAGVITFAANGTLASASADANVAVTNNITAIEASGVGVVQLSGTHTAELRLGNAGSVFKLADGTVINGKVNQTVLVGGVLAAGAITLDGSATITGDIGNGGGGAALQSITLANDATKTLTLGGANIISANGGTINFQANGGTIKLTSTQNNIVVDCDLAIATDQTGVVDASSLTNAQTLTISGTIGIIGANNTTLGQFNIGSSKTTLNGGNVAINELVIGNNGSVQFAHNTYLITRTTNAAGQGKIIFNPVVNNNTTLAAGTNLGSAANPLAEINFGSKGARADTVLNVGEGVNLYATNITTTDANVGSFVFNAGGKNIVSGTVGGQQGNKFNTVALDNGTTVKFLGNATFNGNTTIAANSTLQISGNYTADFIASADGTGIVEFVNTGPINVTLNKQAVPVNALKQITVSGPGNVVVNEIGNAGNYHGAMTDTIAFENSSLGAVLFLPSGIPFNDAGNTIPLTIKSTVGNETAEGFSVPSVIVSGVDSVIADGQVIGDQNNIVGLGLGSDNGIIVNATTLYAGIGTINNNQGTVTLSGGVPNTPGTVYGLGTGIGASKFKQVTFTTDYNNLGNIIATNTTINDGVTVTTGGIAAGGIAGTDFDGKITLGSVNGNANVRFADGIFSNSTSMIVTTKANNGTVTYLGNAFVGNIGDSDTPVASVRFTGSNNGAGLKGNIYSQVIDFGTYNLGIVNSNVILGGSTTAINGKIDLLTNTLTFAGGTSTWGNNTSIETTLTLANGNIGHIVIAEGAQVNATTTGTTTINVQDNANANFSGTQTYTLIQGGARFNGTLGGPNFTVTGSNRFVNYGLIRAANQDYVITRTNNAENIVTNDITNSPFGGAPGVGQNVTTFVNATNTAAYNNLLLAKNSADSANFVGTIVTDTSAAITNAQLDVAKDIQAQLGNRLGALRYLGTPEMVGSEAGAIPAAVAAGDEAVDNVAYGIWAKPFYTDAHQSKKGGLAGYKAKTTGIVIGLDTLANNNLMIGAAIGITKTDIKHQDYKKGDKTDVNGFSFSLYGAQQFVENFFAQGSAIFSLNQVKNKSQRYFFDANGNMSKQIAAGNYDNMTFGGNLTVGYDYNAMQGVLVTPMAGLSYLKSSDENYKETGTTVANKQVNSKFSDRTDLIVGAKVAGGTMNITDFAVYPEVHAFVVHKVTGRLSKTQSVLDGQVTPCISQPDRTAKTSYNLGLSASIRSDAKMEYGIGYDAQIASKYTAHQGTLKVRVNF.

Residues 1339-1363 constitute a propeptide that is removed on maturation; that stretch reads GALRYLGTPEMVGSEAGAIPAAVAA. One can recognise an Autotransporter domain in the interval 1368-1656; it reads VDNVAYGIWA…QGTLKVRVNF (289 aa).

It belongs to the rickettsiae OmpA/OmpB family.

It is found in the periplasm. It localises to the secreted. The protein localises to the cell surface. The protein resides in the cell outer membrane. Its function is as follows. The 120 kDa surface-exposed protein is a major structural protein which may play a role as a rickettsial virulence factor and/or immunogen during infection. The 32 kDa beta peptide may serve as a membrane anchor. This chain is Outer membrane protein B (ompB), found in Rickettsia japonica (strain ATCC VR-1363 / YH).